A 378-amino-acid polypeptide reads, in one-letter code: UDP-N-acetylglucosamine--N-acetylmuramyl-(pentapeptide) pyrophosphoryl-undecaprenol N-acetylglucosamine transferase (378 aa).

UDP-N-acetyl-alpha-D-glucosamine contacts are provided by residues 14–16, N125, R165, S193, and Q293; that span reads TGG.

It belongs to the glycosyltransferase 28 family. MurG subfamily.

The protein resides in the cell inner membrane. The catalysed reaction is di-trans,octa-cis-undecaprenyl diphospho-N-acetyl-alpha-D-muramoyl-L-alanyl-D-glutamyl-meso-2,6-diaminopimeloyl-D-alanyl-D-alanine + UDP-N-acetyl-alpha-D-glucosamine = di-trans,octa-cis-undecaprenyl diphospho-[N-acetyl-alpha-D-glucosaminyl-(1-&gt;4)]-N-acetyl-alpha-D-muramoyl-L-alanyl-D-glutamyl-meso-2,6-diaminopimeloyl-D-alanyl-D-alanine + UDP + H(+). The protein operates within cell wall biogenesis; peptidoglycan biosynthesis. Its function is as follows. Cell wall formation. Catalyzes the transfer of a GlcNAc subunit on undecaprenyl-pyrophosphoryl-MurNAc-pentapeptide (lipid intermediate I) to form undecaprenyl-pyrophosphoryl-MurNAc-(pentapeptide)GlcNAc (lipid intermediate II). The chain is UDP-N-acetylglucosamine--N-acetylmuramyl-(pentapeptide) pyrophosphoryl-undecaprenol N-acetylglucosamine transferase from Bartonella tribocorum (strain CIP 105476 / IBS 506).